A 555-amino-acid polypeptide reads, in one-letter code: Urocanate hydratase (555 aa).

Residues 52–53 (GG), Gln-130, 176–178 (GMG), Glu-196, Arg-201, 242–243 (NA), 263–267 (QTSAH), 272–273 (YL), and Tyr-321 each bind NAD(+). Cys-409 is an active-site residue. Residue Gly-491 coordinates NAD(+).

Belongs to the urocanase family. NAD(+) is required as a cofactor.

Its subcellular location is the cytoplasm. It carries out the reaction 4-imidazolone-5-propanoate = trans-urocanate + H2O. The protein operates within amino-acid degradation; L-histidine degradation into L-glutamate; N-formimidoyl-L-glutamate from L-histidine: step 2/3. Functionally, catalyzes the conversion of urocanate to 4-imidazolone-5-propionate. This is Urocanate hydratase from Nocardioides sp. (strain ATCC BAA-499 / JS614).